Reading from the N-terminus, the 376-residue chain is Response regulator aspartate phosphatase H (376 aa).

TPR repeat units lie at residues 99–132, 139–172, 180–213, 220–253, 259–292, and 334–367; these read YYSL…LPFV, AEFH…YQNH, IQSL…AMDI, AISL…SREK, PKVL…ITAR, and EACA…QEDI.

The protein belongs to the Rap family. Homodimer. Interacts with phosphorylated Spo0F. Each RapH protomer is bound to a monomer of Spo0F, forming a heterotetrameric complex. May also interact with non-phosphorylated Spo0F to inhibit the sporulation phosphorelay. Interacts with the C-terminal DNA-binding region of ComA. Does not interact with DegU.

Its subcellular location is the cytoplasm. Both activities are inhibited by RapH. In terms of biological role, dual specificity regulatory protein that can control both sporulation and competence by acting on two distinct response regulators: Spo0F and ComA, respectively. Is involved in the temporal separation of competence and sporulation. Acts as a phosphatase that specifically dephosphorylates the sporulation initiation phosphotransferase Spo0F and inhibits its activity. RapH can also antagonize sporulation by sterically blocking phosphoryl transfer to and from Spo0F. In addition, inhibits the activity of ComA, a transcriptional factor that regulates the development of genetic competence. Acts by binding to ComA, leading to the inhibition of its DNA-binding activity. The sequence is that of Response regulator aspartate phosphatase H (rapH) from Bacillus subtilis (strain 168).